The chain runs to 372 residues: tRNA-specific 2-thiouridylase MnmA (372 aa).

ATP is bound by residues 16-23 (GMSGGVDS) and methionine 42. Positions 102–104 (NPD) are interaction with target base in tRNA. The active-site Nucleophile is the cysteine 107. Cysteine 107 and cysteine 205 form a disulfide bridge. An ATP-binding site is contributed by glycine 132. The segment at 155–157 (KDQ) is interaction with tRNA. Residue cysteine 205 is the Cysteine persulfide intermediate of the active site. The tract at residues 317-318 (RY) is interaction with tRNA.

It belongs to the MnmA/TRMU family.

Its subcellular location is the cytoplasm. It carries out the reaction S-sulfanyl-L-cysteinyl-[protein] + uridine(34) in tRNA + AH2 + ATP = 2-thiouridine(34) in tRNA + L-cysteinyl-[protein] + A + AMP + diphosphate + H(+). Catalyzes the 2-thiolation of uridine at the wobble position (U34) of tRNA, leading to the formation of s(2)U34. This chain is tRNA-specific 2-thiouridylase MnmA, found in Shewanella baltica (strain OS223).